The sequence spans 756 residues: Virulence factor MDV010 (756 aa).

The first 30 residues, 1–30, serve as a signal peptide directing secretion; that stretch reads MPSKSIADHHAGYGVALAIVALLLIHGTAL. The disordered stretch occupies residues 96-120; it reads EEHITLSSPRTSTKTTNENGHEKDS. Residues 100-113 show a composition bias toward polar residues; that stretch reads TLSSPRTSTKTTNE. 12 N-linked (GlcNAc...) asparagine; by host glycosylation sites follow: asparagine 222, asparagine 241, asparagine 287, asparagine 423, asparagine 495, asparagine 542, asparagine 552, asparagine 580, asparagine 660, asparagine 684, asparagine 715, and asparagine 744.

It localises to the secreted. Its function is as follows. May play a role in host immune modulation since the protein is secreted and provides an advantage for growth in vivo while it is completely dispensable in cell culture. This is Virulence factor MDV010 (MDV010) from Gallid herpesvirus 2 (strain Chicken/Md5/ATCC VR-987) (GaHV-2).